A 206-amino-acid chain; its full sequence is Small ribosomal subunit protein uS4 (206 aa).

Residues 96 to 156 (TRLDNVVYRM…EKSRTQARIK (61 aa)) form the S4 RNA-binding domain.

This sequence belongs to the universal ribosomal protein uS4 family. Part of the 30S ribosomal subunit. Contacts protein S5. The interaction surface between S4 and S5 is involved in control of translational fidelity.

Functionally, one of the primary rRNA binding proteins, it binds directly to 16S rRNA where it nucleates assembly of the body of the 30S subunit. With S5 and S12 plays an important role in translational accuracy. The protein is Small ribosomal subunit protein uS4 of Shewanella putrefaciens (strain CN-32 / ATCC BAA-453).